The chain runs to 268 residues: Zinc transporter ZupT (268 aa).

The next 8 helical transmembrane spans lie at 5–25, 36–56, 75–95, 124–144, 157–177, 187–207, 211–231, and 248–268; these read ILFA…GSLI, VLTI…MIEI, VVTV…DKLI, MGLF…LATF, IAVA…APIF, FILS…GYFL, FFSP…MVYI, and FAIG…LLFT. Positions 136 and 139 each coordinate Fe(2+). Zn(2+) contacts are provided by Glu139 and His164. Positions 165, 168, and 197 each coordinate Fe(2+). Glu168 serves as a coordination point for Zn(2+).

Belongs to the ZIP transporter (TC 2.A.5) family. ZupT subfamily.

The protein resides in the cell membrane. It carries out the reaction Zn(2+)(in) = Zn(2+)(out). Functionally, mediates zinc uptake. May also transport other divalent cations. This chain is Zinc transporter ZupT, found in Chlorobium chlorochromatii (strain CaD3).